Here is a 749-residue protein sequence, read N- to C-terminus: Catalase-peroxidase (749 aa).

A cross-link (tryptophyl-tyrosyl-methioninium (Trp-Tyr) (with M-260)) is located at residues 98 to 234 (WHAAGTYRVQ…LAASHMGLIY (137 aa)). The Proton acceptor role is filled by His99. A cross-link (tryptophyl-tyrosyl-methioninium (Tyr-Met) (with W-98)) is located at residues 234–260 (YVNPEGPNGEPDPVAAAHDIRTTFGRM). Heme b is bound at residue His275.

The protein belongs to the peroxidase family. Peroxidase/catalase subfamily. As to quaternary structure, homodimer or homotetramer. Requires heme b as cofactor. Post-translationally, formation of the three residue Trp-Tyr-Met cross-link is important for the catalase, but not the peroxidase activity of the enzyme.

The protein resides in the cytoplasm. It catalyses the reaction H2O2 + AH2 = A + 2 H2O. The enzyme catalyses 2 H2O2 = O2 + 2 H2O. Its function is as follows. Bifunctional enzyme with both catalase and broad-spectrum peroxidase activity. The sequence is that of Catalase-peroxidase from Mycosarcoma maydis (Corn smut fungus).